A 299-amino-acid chain; its full sequence is Troponin T, cardiac muscle (299 aa).

Residues 1–71 (MSDAEEEVVE…EARDAEDGPV (71 aa)) are compositionally biased toward acidic residues. Disordered stretches follow at residues 1–97 (MSDA…GERV) and 137–220 (DRIE…EKKK). The residue at position 2 (Ser2) is an N-acetylserine. Ser2 carries the post-translational modification Phosphoserine. Basic and acidic residues-rich tracts occupy residues 137 to 185 (DRIE…DEAR) and 204 to 220 (QTERKSGKRQTEREKKK). At Thr205 the chain carries Phosphothreonine; by PKC/PRKCA. Ser209 carries the phosphoserine; by PKC/PRKCA modification. Phosphothreonine; by PKC/PRKCA and RAF1 is present on Thr214. Thr295 is modified (phosphothreonine; by PKC/PRKCA).

It belongs to the troponin T family. In terms of processing, phosphorylation at Thr-214 by PRKCA induces significant reduction in myofilament calcium sensitivity and actomyosin ATPase activity.

In terms of biological role, troponin T is the tropomyosin-binding subunit of troponin, the thin filament regulatory complex which confers calcium-sensitivity to striated muscle actomyosin ATPase activity. This chain is Troponin T, cardiac muscle (Tnnt2), found in Rattus norvegicus (Rat).